The primary structure comprises 372 residues: uncharacterized protein (372 aa).

Residues aspartate 202 and 227-229 (GDF) each bind S-adenosyl-L-methionine.

The protein belongs to the class I-like SAM-binding methyltransferase superfamily. Cation-independent O-methyltransferase family.

This is an uncharacterized protein from Methanocaldococcus jannaschii (strain ATCC 43067 / DSM 2661 / JAL-1 / JCM 10045 / NBRC 100440) (Methanococcus jannaschii).